A 421-amino-acid polypeptide reads, in one-letter code: MAAKAVDKLPVTFGSFVHQIPEGFYPGEDSTLPASVTIFPNVDLGGPLIQMSGVTGDGMISVDMNNDKRSLDFSYSSNYPLAPRTQPIAYMGKISIDHQYSGSGWNTEGIFNLVSAASLLGVPPSSCSSTSSSNASSGSPNLSCSMSHPQSDLEHIYSPPPYSSCNEIYQDPLRFPCGSPTAASLPPPPSYPSPKGASDGGMFPMIPDYSALFPPQCQRDLHSDRKPFPCPRHPSPLSTIRNFTLGGSSEGPRLASAYSPQNLPLRPILRPRKYPNRPSKTPVHERPYPCPAEGCDRRFSRSDELTRHIRIHTGHKPFQCRICMRNFSRSDHLTTHIRTHTGEKPFACDYCGRKFARSDERKRHTKIHLRQKERKNSATAAWRQHVARTSLKPQSGRDRQPCALLGPAAAHWDSIDPNRTG.

The span at Cys-127–Ser-145 shows a compositional bias: low complexity. Disordered regions lie at residues Cys-127–Asp-152, Ser-179–Gly-200, and Ser-223–Tyr-288. Residues Pro-236 to Gly-247 are compositionally biased toward polar residues. 3 consecutive C2H2-type zinc fingers follow at residues Tyr-288–His-312, Phe-318–His-340, and Phe-346–His-368.

This sequence belongs to the EGR C2H2-type zinc-finger protein family.

Its subcellular location is the nucleus. Sequence-specific DNA-binding transcription factor. The sequence is that of Early growth response protein 2 (egr2) from Xenopus laevis (African clawed frog).